The sequence spans 623 residues: Chaperone protein HtpG (623 aa).

The a; substrate-binding stretch occupies residues 1-326 (MAEEKRQFQA…SQDLPLNVSR (326 aa)). Residues 327 to 543 (EMLQHNPVLS…EGEMSMHLEK (217 aa)) are b. The c stretch occupies residues 544 to 623 (MLRAHNQAPG…VSVMEKGLLG (80 aa)).

This sequence belongs to the heat shock protein 90 family. Homodimer.

The protein resides in the cytoplasm. Molecular chaperone. Has ATPase activity. This chain is Chaperone protein HtpG, found in Paramagnetospirillum magneticum (strain ATCC 700264 / AMB-1) (Magnetospirillum magneticum).